The following is a 158-amino-acid chain: 6,7-dimethyl-8-ribityllumazine synthase (158 aa).

Residues phenylalanine 22, 57-59 (AVE), and 81-83 (AVI) contribute to the 5-amino-6-(D-ribitylamino)uracil site. 86-87 (GT) contributes to the (2S)-2-hydroxy-3-oxobutyl phosphate binding site. The active-site Proton donor is the histidine 89. Phenylalanine 114 contacts 5-amino-6-(D-ribitylamino)uracil. Position 128 (arginine 128) interacts with (2S)-2-hydroxy-3-oxobutyl phosphate.

The protein belongs to the DMRL synthase family. Forms an icosahedral capsid composed of 60 subunits, arranged as a dodecamer of pentamers.

The enzyme catalyses (2S)-2-hydroxy-3-oxobutyl phosphate + 5-amino-6-(D-ribitylamino)uracil = 6,7-dimethyl-8-(1-D-ribityl)lumazine + phosphate + 2 H2O + H(+). It participates in cofactor biosynthesis; riboflavin biosynthesis; riboflavin from 2-hydroxy-3-oxobutyl phosphate and 5-amino-6-(D-ribitylamino)uracil: step 1/2. Its function is as follows. Catalyzes the formation of 6,7-dimethyl-8-ribityllumazine by condensation of 5-amino-6-(D-ribitylamino)uracil with 3,4-dihydroxy-2-butanone 4-phosphate. This is the penultimate step in the biosynthesis of riboflavin. The polypeptide is 6,7-dimethyl-8-ribityllumazine synthase (Shewanella pealeana (strain ATCC 700345 / ANG-SQ1)).